Reading from the N-terminus, the 116-residue chain is MLSCRLQCALALLSIALAVGTVSAAPSDPRLRQFLQKSLAAAAGKQELAKYFLAELLSEPSQTENEALESEDLSRGAEQDEVRLELERSANSNPALAPRERKAGCKNFFWKTFTSC.

Positions 1 to 24 (MLSCRLQCALALLSIALAVGTVSA) are cleaved as a signal peptide. Residues 25-88 (APSDPRLRQF…QDEVRLELER (64 aa)) constitute a propeptide that is removed on maturation. The segment at 60–82 (PSQTENEALESEDLSRGAEQDEV) is disordered. Positions 72 to 82 (DLSRGAEQDEV) are enriched in basic and acidic residues. An intrachain disulfide couples Cys-105 to Cys-116.

Belongs to the somatostatin family.

It is found in the secreted. In terms of biological role, somatostatin inhibits the release of somatotropin. The polypeptide is Somatostatin (SST) (Gallus gallus (Chicken)).